Reading from the N-terminus, the 733-residue chain is Submandibular gland protein C (733 aa).

Positions 1 to 20 are cleaved as a signal peptide; that stretch reads MKLILLYLAVVLCFVGKARS. Residues 48-91 form a disordered region; the sequence is KSSGGSKDYNLSDGGKSNSRKNLSPATGGSATQQSNLDDSHAPN. Asn57 carries an N-linked (GlcNAc...) asparagine glycan. Positions 62 to 84 are enriched in polar residues; sequence GKSNSRKNLSPATGGSATQQSNL. 2 N-linked (GlcNAc...) asparagine glycosylation sites follow: Asn141 and Asn187. Disordered stretches follow at residues 172 to 204, 249 to 330, 369 to 450, and 496 to 733; these read GQQA…ADKP, LTED…NSSN, and SVTE…PSVA. Polar residues predominate over residues 186-199; it reads ENSSLSTGSATSNK. A compositionally biased stretch (low complexity) spans 256–270; it reads TSTSASVSGDSSTSS. The span at 300–318 shows a compositional bias: polar residues; sequence GSKQNVEDSTLSTGSATSN. Asn327 carries an N-linked (GlcNAc...) asparagine glycan. Positions 376-390 are enriched in low complexity; it reads TSTSASVSGDSSTSS. Residues 420-438 show a composition bias toward polar residues; that stretch reads GSKQNVEDSTLSTGSATSN. 3 N-linked (GlcNAc...) asparagine glycosylation sites follow: Asn447, Asn514, and Asn528. Polar residues-rich tracts occupy residues 496–516 and 525–535; these read SVTE…NNLS and NPTNGSSSASS. Over residues 538–552 the composition is skewed to basic and acidic residues; the sequence is KPYEEGMRKLLKFLE. Low complexity-rich tracts occupy residues 563–574 and 609–619; these read SVSGMSSESSRS and SSNSSTGSATS. N-linked (GlcNAc...) asparagine glycosylation is present at Asn611. Residues 654–665 show a composition bias toward gly residues; that stretch reads GFNGPEGVGENN. Residues 677–701 are compositionally biased toward low complexity; the sequence is GSKSDSGSHNLSSGSGSRSNVSTGG. Residues Asn686 and Asn696 are each glycosylated (N-linked (GlcNAc...) asparagine). The segment covering 722–733 has biased composition (polar residues); that stretch reads TGKTQSGSPSVA.

In terms of processing, N-glycosylated. In terms of tissue distribution, detected in terminal tubule cells of the submandibular gland (at protein level). Expressed in submandibular salivary glands of 3-day-old males but not adults. Expression in adult submandibular glands is restricted to females. Isoform 5 is expressed in both 3-day-old and adult sublingual glands.

Its subcellular location is the secreted. This Mus musculus (Mouse) protein is Submandibular gland protein C (Muc19).